Here is a 390-residue protein sequence, read N- to C-terminus: D-alanyl-D-alanine carboxypeptidase DacD (390 aa).

The N-terminal stretch at 1–23 (MLLKRRLFIAASLFAMHLSPALA) is a signal peptide. The active-site Acyl-ester intermediate is Ser65. Lys68 serves as the catalytic Proton acceptor. Residue Ser131 is part of the active site. Lys234 contacts substrate.

Belongs to the peptidase S11 family.

The protein resides in the cell inner membrane. It carries out the reaction Preferential cleavage: (Ac)2-L-Lys-D-Ala-|-D-Ala. Also transpeptidation of peptidyl-alanyl moieties that are N-acyl substituents of D-alanine.. It participates in cell wall biogenesis; peptidoglycan biosynthesis. In terms of biological role, removes C-terminal D-alanyl residues from sugar-peptide cell wall precursors. The sequence is that of D-alanyl-D-alanine carboxypeptidase DacD (dacD) from Salmonella typhimurium (strain LT2 / SGSC1412 / ATCC 700720).